We begin with the raw amino-acid sequence, 419 residues long: MRNIFKRNQEPIVAPATTTATMPIGPVDNSTESGGAGESQEDMFAKLKEKLFNEINKIPLPPWALIAIAVVAGLLLLTCCFCICKKCCCKKKKNKKEKGKGMKNAMNMKDMKGGQDDDDAETGLTEGEGEGEEEKEPENLGKLQFSLDYDFQANQLTVGVLQAAELPALDMGGTSDPYVKVFLLPDKKKKYETKVHRKTLNPAFNETFTFKVPYQELGGKTLVMAIYDFDRFSKHDIIGEVKVPMNTVDLGQPIEEWRDLQGGEKEEPEKLGDICTSLRYVPTAGKLTVCILEAKNLKKMDVGGLSDPYVKIHLMQNGKRLKKKKTTVKKKTLNPYFNESFSFEIPFEQIQKVQVVVTVLDYDKLGKNEAIGKIFVGSNATGTELRHWSDMLANPRRPIAQWHSLKPEEEVDALLGKNK.

Residues 1–62 (MRNIFKRNQE…NEINKIPLPP (62 aa)) lie on the Vesicular side of the membrane. The interval 16-39 (ATTTATMPIGPVDNSTESGGAGES) is disordered. N-linked (GlcNAc...) asparagine glycosylation occurs at Asn-29. A helical membrane pass occupies residues 63–83 (WALIAIAVVAGLLLLTCCFCI). Residues 84 to 419 (CKKCCCKKKK…EVDALLGKNK (336 aa)) lie on the Cytoplasmic side of the membrane. The tract at residues 99–138 (GKGMKNAMNMKDMKGGQDDDDAETGLTEGEGEGEEEKEPE) is disordered. The span at 116 to 136 (DDDDAETGLTEGEGEGEEEKE) shows a compositional bias: acidic residues. 2 positions are modified to phosphothreonine: Thr-122 and Thr-125. Residues 133-379 (EEKEPENLGK…AIGKIFVGSN (247 aa)) form a phospholipid binding region. 2 consecutive C2 domains span residues 139 to 258 (NLGK…EEWR) and 270 to 403 (KLGD…AQWH). Ca(2+) contacts are provided by Leu-169, Asp-170, and Asp-176. Thr-199 carries the phosphothreonine modification. A Phosphotyrosine modification is found at Tyr-227. Residues Asp-228, Phe-229, Asp-230, Ser-233, Lys-234, Asp-236, Asp-301, Asp-307, Asp-361, and Asp-363 each coordinate Ca(2+). At Thr-383 the chain carries Phosphothreonine.

It belongs to the synaptotagmin family. In terms of assembly, homotetramer. Heterodimer; heterodimerizes with SYT1 in presence of calcium. Interacts with STON2. Interacts with SCAMP5. Interacts with PRRT2. Ca(2+) is required as a cofactor. In terms of processing, phosphorylation at Thr-199 by WNK1, changes the calcium requirement for SYT2-binding to phospholipid membranes. In terms of tissue distribution, expressed at the neuromuscular junction. Expressed in melanocytes.

Its subcellular location is the cytoplasmic vesicle. The protein localises to the secretory vesicle. It localises to the synaptic vesicle membrane. The protein resides in the chromaffin granule membrane. It is found in the cytoplasm. In terms of biological role, exhibits calcium-dependent phospholipid and inositol polyphosphate binding properties. May have a regulatory role in the membrane interactions during trafficking of synaptic vesicles at the active zone of the synapse. Plays a role in dendrite formation by melanocytes. In Homo sapiens (Human), this protein is Synaptotagmin-2.